The primary structure comprises 292 residues: MSKSKRIILSVVIILAVGIGLFFFLREVFSGRLIVRDYIFQIGKFQLRWYSICIASGILVAYVLARRRLSMYPIKPEDLDEGLFWGIVAGILGARIYYVIFNWNYYSKYPSEIYKIWHGGLAIHGGIFGALLMIFIYSKIKGYFKFVHATDLFTSVLPLAQAIGRWGNFFNYEAYGRPTTLPWKMYVPPERRMPGFDIDRFFHPTFLYESLWDITIFVFLYFFVEKRKREYGETTALYLILYSLGRFWIESLRLDSLMAGHFRAAQVVSIILIFIGAAWYAYIIGKTGKRDN.

Helical transmembrane passes span 7–27, 45–65, 83–103, and 116–136; these read IILSVVIILAVGIGLFFFLRE, FQLRWYSICIASGILVAYVLA, LFWGIVAGILGARIYYVIFNW, and IWHGGLAIHGGIFGALLMIFI. Arg-165 contributes to the a 1,2-diacyl-sn-glycero-3-phospho-(1'-sn-glycerol) binding site. 2 consecutive transmembrane segments (helical) span residues 204–224 and 264–284; these read PTFLYESLWDITIFVFLYFFV and AAQVVSIILIFIGAAWYAYII.

It belongs to the Lgt family.

Its subcellular location is the cell inner membrane. It carries out the reaction L-cysteinyl-[prolipoprotein] + a 1,2-diacyl-sn-glycero-3-phospho-(1'-sn-glycerol) = an S-1,2-diacyl-sn-glyceryl-L-cysteinyl-[prolipoprotein] + sn-glycerol 1-phosphate + H(+). Its pathway is protein modification; lipoprotein biosynthesis (diacylglyceryl transfer). Functionally, catalyzes the transfer of the diacylglyceryl group from phosphatidylglycerol to the sulfhydryl group of the N-terminal cysteine of a prolipoprotein, the first step in the formation of mature lipoproteins. This is Phosphatidylglycerol--prolipoprotein diacylglyceryl transferase from Fervidobacterium nodosum (strain ATCC 35602 / DSM 5306 / Rt17-B1).